A 252-amino-acid polypeptide reads, in one-letter code: Gamma carbonic anhydrase-like 1, mitochondrial (252 aa).

Residues 1-29 (MATSIARLSRRGVTSNLIRRCFAAEAALA) constitute a mitochondrion transit peptide. Substrate is bound by residues 99-101 (RGD) and 114-115 (QE). His120 serves as a coordination point for Zn(2+). Substrate-binding residues include Arg148, Gln160, and Tyr227.

The protein belongs to the gamma-class carbonic anhydrase family. As to quaternary structure, component of the mitochondrial oxidoreductase respiratory chain complex I; element of the extra matrix-exposed domain, which is attached to the membrane arm of this complex. Interacts with GAMMACA2.

It is found in the mitochondrion membrane. In terms of biological role, involved in complex I assembly in mitochondria and respiration. In Arabidopsis thaliana (Mouse-ear cress), this protein is Gamma carbonic anhydrase-like 1, mitochondrial (GAMMACAL1).